A 364-amino-acid polypeptide reads, in one-letter code: RNA-binding protein 4 (364 aa).

RRM domains are found at residues 2–72 and 78–148; these read VKLF…ASKN and TKLH…LSTS. Lys79 is covalently cross-linked (Glycyl lysine isopeptide (Lys-Gly) (interchain with G-Cter in SUMO2)). Position 86 is a phosphoserine (Ser86). A Glycyl lysine isopeptide (Lys-Gly) (interchain with G-Cter in SUMO2) cross-link involves residue Lys92. The CCHC-type zinc finger occupies 160 to 177; sequence SGCYRCGKEGHWSKECPI. An interaction with TNPO3 region spans residues 196 to 364; sequence AVRTPYTMSY…YADRARYSAF (169 aa). Position 309 is a phosphoserine (Ser309).

As to quaternary structure, interacts with TNPO3; the interaction mediates nuclear import of the protein and is disrupted by nuclear Ran bound to GTP. Interacts with EIF4G1 and WT1. Interacts with EIF4A1; the interaction is modulated under stress-induced conditions. Interacts with AGO1. Interacts with AGO2; the interaction occurs under both cell proliferation and differentiation conditions and in an RNA- and phosphorylation-independent manner. Interacts with DDX5; the interaction occurs in an RNA-independent manner. Interacts with RBPMS; the interaction allows cooperative assembly of RNA-bound stable cell-specific alternative splicing regulatory complexes. Post-translationally, phosphorylated. Phosphorylated in vitro on Ser-309 by SRPK1. Phosphorylation on Ser-309 is induced upon cell stress signaling, which alters its subcellular localization and may modulate its activity on IRES-mediated mRNA translation. Phosphorylation on Ser-309 is induced upon cell muscle differentiation.

The protein resides in the nucleus. The protein localises to the nucleolus. It localises to the nucleus speckle. It is found in the cytoplasm. Its subcellular location is the cytoplasmic granule. Its function is as follows. RNA-binding factor involved in multiple aspects of cellular processes like alternative splicing of pre-mRNA and translation regulation. Modulates alternative 5'-splice site and exon selection. Acts as a muscle cell differentiation-promoting factor. Activates exon skipping of the PTB pre-mRNA during muscle cell differentiation. Antagonizes the activity of the splicing factor PTBP1 to modulate muscle cell-specific exon selection of alpha tropomyosin. Binds to intronic pyrimidine-rich sequence of the TPM1 and MAPT pre-mRNAs. Required for the translational activation of PER1 mRNA in response to circadian clock. Binds directly to the 3'-UTR of the PER1 mRNA. Exerts a suppressive activity on Cap-dependent translation via binding to CU-rich responsive elements within the 3'UTR of mRNAs, a process increased under stress conditions or during myocytes differentiation. Recruits EIF4A1 to stimulate IRES-dependent translation initiation in respons to cellular stress. Associates to internal ribosome entry segment (IRES) in target mRNA species under stress conditions. Plays a role for miRNA-guided RNA cleavage and translation suppression by promoting association of AGO2-containing miRNPs with their cognate target mRNAs. Associates with miRNAs during muscle cell differentiation. Binds preferentially to 5'-CGCGCG[GCA]-3' motif in vitro. This Macaca fascicularis (Crab-eating macaque) protein is RNA-binding protein 4 (RBM4).